Consider the following 333-residue polypeptide: Protein amalgam (333 aa).

An N-terminal signal peptide occupies residues 1 to 23; it reads MARLRLLIGLIFCLAISLDSVLS. One can recognise an Ig-like V-type domain in the interval 25–128; the sequence is PVISQISKDV…VLVSATEKVT (104 aa). Asparagine 45 and asparagine 86 each carry an N-linked (GlcNAc...) asparagine glycan. 3 disulfides stabilise this stretch: cysteine 46–cysteine 117, cysteine 161–cysteine 208, and cysteine 251–cysteine 307. Ig-like C2-type domains are found at residues 139–223 and 230–323; these read PVIA…RLIR and PQIA…LHLF. Asparagine 308 carries N-linked (GlcNAc...) asparagine glycosylation.

The protein localises to the cell membrane. The chain is Protein amalgam (Ama) from Drosophila melanogaster (Fruit fly).